The sequence spans 195 residues: Thymidine kinase (195 aa).

ATP-binding positions include 8–15 (GLMGSGKS) and 86–89 (DESQ). Residue E87 is the Proton acceptor of the active site. Zn(2+) is bound by residues C146, C151, C184, and H187.

This sequence belongs to the thymidine kinase family. In terms of assembly, homotetramer.

The protein resides in the cytoplasm. It carries out the reaction thymidine + ATP = dTMP + ADP + H(+). This chain is Thymidine kinase (tdk), found in Bacillus subtilis subsp. natto.